Consider the following 1083-residue polypeptide: DNA primase (1083 aa).

Residues 1022-1061 form a CHC2-type zinc finger; that stretch reads CLRYPHRGGRTAPRTFVSLRVDHHNRLCISLAQQCFATKC.

The protein belongs to the herpesviridae DNA primase family. Associates with the helicase and the primase-associated factor to form the helicase-primase factor.

It is found in the host nucleus. Its function is as follows. Essential component of the helicase/primase complex. Unwinds the DNA at the replication forks and generates single-stranded DNA for both leading and lagging strand synthesis. The primase initiates primer synthesis and thereby produces large amount of short RNA primers on the lagging strand that the polymerase elongates using dNTPs. The protein is DNA primase of Varicella-zoster virus (strain Oka vaccine) (HHV-3).